A 344-amino-acid chain; its full sequence is Acetylpolyamine amidohydrolase 2 (344 aa).

His159 (proton donor/acceptor) is an active-site residue. The Zn(2+) site is built by Asp195, His197, and Asp284.

The protein belongs to the histone deacetylase family. As to quaternary structure, homodimer. It depends on Zn(2+) as a cofactor.

The catalysed reaction is N-acetylputrescine + H2O = putrescine + acetate. It catalyses the reaction N-acetylcadaverine + H2O = cadaverine + acetate. Its pathway is amine and polyamine metabolism. In terms of biological role, catalyzes the deacetylation of acetylated polyamines such as N-acetylputrescine and N-acetylcadaverine. Plays an important role in the metabolism of acetylated polyamines in P.aeruginosa. Is involved in the degradation pathways of N-acetylputrescine and N-acetylcadaverine, that allow P.aeruginosa to utilize these acetylpolyamines as a carbon source under glucose starvation. Shows nearly no activity against N(1)-acetylspermine and N(1)-acetylspermidine. Can also hydrolyze artificial trifluoroacetylated lysine-derivative, and to a lesser extent, acetylated lysine-derivative. This Pseudomonas aeruginosa (strain ATCC 15692 / DSM 22644 / CIP 104116 / JCM 14847 / LMG 12228 / 1C / PRS 101 / PAO1) protein is Acetylpolyamine amidohydrolase 2.